Consider the following 279-residue polypeptide: Large ribosomal subunit protein uL2 (279 aa).

The tract at residues glycine 222–arginine 279 is disordered. The segment covering isoleucine 269–arginine 279 has biased composition (basic residues).

This sequence belongs to the universal ribosomal protein uL2 family. In terms of assembly, part of the 50S ribosomal subunit. Forms a bridge to the 30S subunit in the 70S ribosome.

One of the primary rRNA binding proteins. Required for association of the 30S and 50S subunits to form the 70S ribosome, for tRNA binding and peptide bond formation. It has been suggested to have peptidyltransferase activity; this is somewhat controversial. Makes several contacts with the 16S rRNA in the 70S ribosome. This Caulobacter vibrioides (strain ATCC 19089 / CIP 103742 / CB 15) (Caulobacter crescentus) protein is Large ribosomal subunit protein uL2.